The sequence spans 168 residues: Putative postmeiotic segregation increased 2-like protein 3 (168 aa).

The 77-residue stretch at 8-84 (VSFKDVAVDF…EGEFPCQHSP (77 aa)) folds into the KRAB domain.

Belongs to the DNA mismatch repair MutL/HexB family.

This Homo sapiens (Human) protein is Putative postmeiotic segregation increased 2-like protein 3 (PMS2P3).